A 349-amino-acid polypeptide reads, in one-letter code: Protein-glutamate methylesterase/protein-glutamine glutaminase (349 aa).

Residues 5-122 form the Response regulatory domain; it reads RVLCVDDSAL…REGMLAYSEL (118 aa). Residue Asp-56 is modified to 4-aspartylphosphate. One can recognise a CheB-type methylesterase domain in the interval 152 to 344; it reads LLSSEKLIAI…QRMLAQISSG (193 aa). Active-site residues include Ser-164, His-190, and Asp-286.

This sequence belongs to the CheB family. In terms of processing, phosphorylated by CheA. Phosphorylation of the N-terminal regulatory domain activates the methylesterase activity.

Its subcellular location is the cytoplasm. The catalysed reaction is [protein]-L-glutamate 5-O-methyl ester + H2O = L-glutamyl-[protein] + methanol + H(+). It catalyses the reaction L-glutaminyl-[protein] + H2O = L-glutamyl-[protein] + NH4(+). Its function is as follows. Involved in chemotaxis. Part of a chemotaxis signal transduction system that modulates chemotaxis in response to various stimuli. Catalyzes the demethylation of specific methylglutamate residues introduced into the chemoreceptors (methyl-accepting chemotaxis proteins or MCP) by CheR. Also mediates the irreversible deamidation of specific glutamine residues to glutamic acid. The protein is Protein-glutamate methylesterase/protein-glutamine glutaminase of Yersinia pestis bv. Antiqua (strain Antiqua).